The following is an 89-amino-acid chain: Large ribosomal subunit protein bL27 (89 aa).

The tract at residues 1–26 (MAHKKAGGSSRNGRDSAGQRRGVKRF) is disordered.

It belongs to the bacterial ribosomal protein bL27 family.

This Nitratidesulfovibrio vulgaris (strain DSM 19637 / Miyazaki F) (Desulfovibrio vulgaris) protein is Large ribosomal subunit protein bL27.